A 344-amino-acid polypeptide reads, in one-letter code: Putative glycosyltransferase EpsH (344 aa).

The protein belongs to the glycosyltransferase 2 family.

May be involved in the production of the exopolysaccharide (EPS) component of the extracellular matrix during biofilm formation. EPS is responsible for the adhesion of chains of cells into bundles. Required for biofilm maintenance. The chain is Putative glycosyltransferase EpsH (epsH) from Bacillus subtilis (strain 168).